We begin with the raw amino-acid sequence, 393 residues long: Bifunctional enzyme IspD/IspF (393 aa).

The 2-C-methyl-D-erythritol 4-phosphate cytidylyltransferase stretch occupies residues 1–234 (MTISQRTAAI…ARLAAQLGDI (234 aa)). Residues 235–393 (RTGTGYDVHA…SATIRLPWSA (159 aa)) form a 2-C-methyl-D-erythritol 2,4-cyclodiphosphate synthase region. A divalent metal cation is bound by residues Asp241 and His243. Residues 241–243 (DVH) and 267–268 (HS) contribute to the 4-CDP-2-C-methyl-D-erythritol 2-phosphate site. His275 lines the a divalent metal cation pocket. Residues 289 to 291 (DIG), 365 to 368 (TTSE), Phe372, and Arg375 contribute to the 4-CDP-2-C-methyl-D-erythritol 2-phosphate site.

It in the N-terminal section; belongs to the IspD/TarI cytidylyltransferase family. IspD subfamily. The protein in the C-terminal section; belongs to the IspF family. It depends on a divalent metal cation as a cofactor.

The enzyme catalyses 2-C-methyl-D-erythritol 4-phosphate + CTP + H(+) = 4-CDP-2-C-methyl-D-erythritol + diphosphate. The catalysed reaction is 4-CDP-2-C-methyl-D-erythritol 2-phosphate = 2-C-methyl-D-erythritol 2,4-cyclic diphosphate + CMP. The protein operates within isoprenoid biosynthesis; isopentenyl diphosphate biosynthesis via DXP pathway; isopentenyl diphosphate from 1-deoxy-D-xylulose 5-phosphate: step 2/6. Its pathway is isoprenoid biosynthesis; isopentenyl diphosphate biosynthesis via DXP pathway; isopentenyl diphosphate from 1-deoxy-D-xylulose 5-phosphate: step 4/6. Its function is as follows. Bifunctional enzyme that catalyzes the formation of 4-diphosphocytidyl-2-C-methyl-D-erythritol from CTP and 2-C-methyl-D-erythritol 4-phosphate (MEP) (IspD), and catalyzes the conversion of 4-diphosphocytidyl-2-C-methyl-D-erythritol 2-phosphate (CDP-ME2P) to 2-C-methyl-D-erythritol 2,4-cyclodiphosphate (ME-CPP) with a corresponding release of cytidine 5-monophosphate (CMP) (IspF). In Bradyrhizobium sp. (strain BTAi1 / ATCC BAA-1182), this protein is Bifunctional enzyme IspD/IspF.